The primary structure comprises 262 residues: Shikimate dehydrogenase (NADP(+)) (262 aa).

Shikimate contacts are provided by residues 15 to 17 (SRS) and threonine 62. Lysine 66 acts as the Proton acceptor in catalysis. Residue glutamate 78 coordinates NADP(+). Shikimate is bound by residues asparagine 87 and aspartate 102. Residues 126–130 (GAGGA), 150–155 (NRTLAR), and methionine 214 each bind NADP(+). Tyrosine 216 contributes to the shikimate binding site. Glycine 236 is an NADP(+) binding site.

This sequence belongs to the shikimate dehydrogenase family. Homodimer.

It carries out the reaction shikimate + NADP(+) = 3-dehydroshikimate + NADPH + H(+). Its pathway is metabolic intermediate biosynthesis; chorismate biosynthesis; chorismate from D-erythrose 4-phosphate and phosphoenolpyruvate: step 4/7. In terms of biological role, involved in the biosynthesis of the chorismate, which leads to the biosynthesis of aromatic amino acids. Catalyzes the reversible NADPH linked reduction of 3-dehydroshikimate (DHSA) to yield shikimate (SA). The chain is Shikimate dehydrogenase (NADP(+)) from Acinetobacter baumannii (strain ACICU).